Here is a 153-residue protein sequence, read N- to C-terminus: Ribosome-binding factor A (153 aa).

The tract at residues 116-153 is disordered; it reads DAQVAEQAQGAQYAAGEDAYRTPSDEDDAEGPESAPRV. Residues 119–132 show a composition bias toward low complexity; it reads VAEQAQGAQYAAGE.

This sequence belongs to the RbfA family. As to quaternary structure, monomer. Binds 30S ribosomal subunits, but not 50S ribosomal subunits or 70S ribosomes.

Its subcellular location is the cytoplasm. Its function is as follows. One of several proteins that assist in the late maturation steps of the functional core of the 30S ribosomal subunit. Associates with free 30S ribosomal subunits (but not with 30S subunits that are part of 70S ribosomes or polysomes). Required for efficient processing of 16S rRNA. May interact with the 5'-terminal helix region of 16S rRNA. The chain is Ribosome-binding factor A from Kocuria rhizophila (strain ATCC 9341 / DSM 348 / NBRC 103217 / DC2201).